The following is a 103-amino-acid chain: Large ribosomal subunit protein bL21 (103 aa).

It belongs to the bacterial ribosomal protein bL21 family. In terms of assembly, part of the 50S ribosomal subunit. Contacts protein L20.

This protein binds to 23S rRNA in the presence of protein L20. In Wolinella succinogenes (strain ATCC 29543 / DSM 1740 / CCUG 13145 / JCM 31913 / LMG 7466 / NCTC 11488 / FDC 602W) (Vibrio succinogenes), this protein is Large ribosomal subunit protein bL21.